Here is a 78-residue protein sequence, read N- to C-terminus: Structural DNA-binding protein p10 (78 aa).

Over residues 1–27 (MPTKAGTKSTANKKTTKGSSKSGSSRG) the composition is skewed to low complexity. The disordered stretch occupies residues 1-41 (MPTKAGTKSTANKKTTKGSSKSGSSRGHTGKTHASSSMHSG).

Belongs to the asfivirus P10 family.

Its subcellular location is the virion. May play a role in genome packaging through direct interaction with viral DNA. Binds to ssDNA and dsDNA with the same apparent affinity in vitro. The chain is Structural DNA-binding protein p10 from African swine fever virus (strain Badajoz 1971 Vero-adapted) (Ba71V).